We begin with the raw amino-acid sequence, 147 residues long: Large ribosomal subunit protein uL15 (147 aa).

The interval 1 to 55 is disordered; sequence MKLDNLAPQPGAKKRKRRVGRGIAAGQGASCGFGMRGQKSRSGRPTRPGFEGGQM. A compositionally biased stretch (gly residues) spans 23-35; the sequence is IAAGQGASCGFGM.

It belongs to the universal ribosomal protein uL15 family. Part of the 50S ribosomal subunit.

In terms of biological role, binds to the 23S rRNA. This is Large ribosomal subunit protein uL15 from Synechococcus elongatus (strain ATCC 33912 / PCC 7942 / FACHB-805) (Anacystis nidulans R2).